A 353-amino-acid chain; its full sequence is Protein RecA (353 aa).

An ATP-binding site is contributed by 65 to 72; that stretch reads GPESSGKT. Residues 334–345 show a composition bias toward basic and acidic residues; it reads DAERAGAEREDN. The disordered stretch occupies residues 334 to 353; it reads DAERAGAEREDNAAADDENF.

This sequence belongs to the RecA family.

It is found in the cytoplasm. Can catalyze the hydrolysis of ATP in the presence of single-stranded DNA, the ATP-dependent uptake of single-stranded DNA by duplex DNA, and the ATP-dependent hybridization of homologous single-stranded DNAs. It interacts with LexA causing its activation and leading to its autocatalytic cleavage. This chain is Protein RecA, found in Edwardsiella ictaluri (strain 93-146).